A 376-amino-acid chain; its full sequence is Nuclear egress protein 1 (376 aa).

Phosphoserine is present on Ser19. The disordered stretch occupies residues 22 to 57 (RKRRQRELASKVASTVNGATSANNHGEPPSPADARP). Polar residues predominate over residues 33-45 (VASTVNGATSANN). Residues 106–211 (CLDISPYGNE…HVIFENPDVH (106 aa)) form a CCCH-type zinc finger. The segment at 316–376 (VVSTNGCGPS…PLFLNSIRAP (61 aa)) is disordered. The segment covering 317-332 (VSTNGCGPSSSSQSTP) has biased composition (polar residues).

This sequence belongs to the herpesviridae NEC1 protein family. In terms of assembly, forms a heterohexameric complex with NEC2. Interacts with capsid vertex specific component 2/CVC2; this interaction directs the capsid to the host inner nuclear membrane to initiate budding. In terms of processing, phosphorylated at serine residues in the N-terminus. This phosphorylation regulates the localization within the inner nuclear membrane. Phosphorylation by viral kinase UL97 at Ser-19 plays an important role for correct viral nuclear egress complex (NEC) localization.

It localises to the host nucleus inner membrane. Its function is as follows. Plays an essential role in virion nuclear egress, the first step of virion release from infected cell. Within the host nucleus, NEC1 interacts with the newly formed capsid through the vertexes and directs it to the inner nuclear membrane by associating with NEC2. Induces the budding of the capsid at the inner nuclear membrane as well as its envelopment into the perinuclear space. There, the NEC1/NEC2 complex promotes the fusion of the enveloped capsid with the outer nuclear membrane and the subsequent release of the viral capsid into the cytoplasm where it will reach the secondary budding sites in the host Golgi or trans-Golgi network. In Homo sapiens (Human), this protein is Nuclear egress protein 1.